A 128-amino-acid chain; its full sequence is Group 2 truncated hemoglobin GlbO (128 aa).

The isodityrosine (Tyr-Tyr) cross-link spans 23 to 36 (YAQVAEDEVLRRVY). Tyrosine 36 carries the 3',4'-dihydroxyphenylalanine modification. Histidine 75 provides a ligand contact to heme.

It belongs to the truncated hemoglobin family. Group II subfamily. As to quaternary structure, homododecamer. It depends on heme as a cofactor. In terms of processing, contains L-DOPA (3',4'-dihydroxyphenylalanine).

In Mycobacterium bovis (strain ATCC BAA-935 / AF2122/97), this protein is Group 2 truncated hemoglobin GlbO (glbO).